We begin with the raw amino-acid sequence, 88 residues long: Small ribosomal subunit protein bS20 (88 aa).

It belongs to the bacterial ribosomal protein bS20 family.

In terms of biological role, binds directly to 16S ribosomal RNA. The sequence is that of Small ribosomal subunit protein bS20 from Aromatoleum aromaticum (strain DSM 19018 / LMG 30748 / EbN1) (Azoarcus sp. (strain EbN1)).